A 185-amino-acid polypeptide reads, in one-letter code: Ribosome-recycling factor (185 aa).

It belongs to the RRF family.

It localises to the cytoplasm. Functionally, responsible for the release of ribosomes from messenger RNA at the termination of protein biosynthesis. May increase the efficiency of translation by recycling ribosomes from one round of translation to another. The protein is Ribosome-recycling factor of Clostridium kluyveri (strain NBRC 12016).